The primary structure comprises 119 residues: MVSLKPSKQRKLLYTLPLHQRKKLLVAKVSDDIASQYGIKRIRVRKGDTVRVMRGGNSGKEGKVVEVNTKTGRLAIEGITRKKVDGTPVYVWIHASKVMITKLDLSDPRRREKLEKSKK.

The protein belongs to the universal ribosomal protein uL24 family. Part of the 50S ribosomal subunit.

Its function is as follows. One of two assembly initiator proteins, it binds directly to the 5'-end of the 23S rRNA, where it nucleates assembly of the 50S subunit. Functionally, located at the polypeptide exit tunnel on the outside of the subunit. This is Large ribosomal subunit protein uL24 from Saccharolobus solfataricus (strain ATCC 35092 / DSM 1617 / JCM 11322 / P2) (Sulfolobus solfataricus).